Consider the following 221-residue polypeptide: MFSELPPSVPTALLQWGWGLHRGPCSIPNFKQVASQHSVQNDFTENSVDANEKFPIGHAGCIEKTKDDYVPFDTLFMVSSIDELGRRQLTDTIRRSLVMNACEITVACTKTAAFSGRGVSRQKHVTLSKNKFNPSSHKSLQMFVLCQKTHAPRVRNLLYESIRARRPRRYYTRSTDGKSRPLVPVFVYEFTALDRVLLHKENTLTDQPINTENSGHGRTRT.

It belongs to the alphaherpesvirinae HHV-1 UL3 family. Post-translationally, phosphorylated.

Its subcellular location is the host nucleus. The polypeptide is Nuclear phosphoprotein UL3 homolog (Varicella-zoster virus (strain Dumas) (HHV-3)).